Reading from the N-terminus, the 265-residue chain is Aquaporin-5 (265 aa).

Topologically, residues 1 to 12 (MKKEVCSVAFFK) are cytoplasmic. A helical membrane pass occupies residues 13–33 (AVFAEFLATLIFVFFGLGSAL). At 34 to 39 (KWPSAL) the chain is on the extracellular side. A helical transmembrane segment spans residues 40-60 (PTILQISIAFGLAIGTLAQAL). Residues 61–65 (GPVSG) are Cytoplasmic-facing. The discontinuously helical intramembrane region spans 66–74 (GHINPAITL). The short motif at 69–71 (NPA) is the NPA 1 element. At 75–87 (ALLIGNQISLLRA) the chain is on the cytoplasmic side. The helical transmembrane segment at 88–108 (IFYVAAQLVGAIAGAGILYWL) threads the bilayer. The Extracellular segment spans residues 109–126 (APGNARGNLAVNALSNNT). An N-linked (GlcNAc...) asparagine glycan is attached at Asn-124. Residues 127-147 (TPGKAVVVELILTFQLALCIF) traverse the membrane as a helical segment. Topologically, residues 148-158 (SSTDSRRTSPV) are cytoplasmic. The chain crosses the membrane as a helical span at residues 159 to 179 (GSPALSIGLSVTLGHLVGIYF). Residue Thr-180 is a topological domain, extracellular. Positions 181 to 191 (GCSMNPARSFG) form an intramembrane region, discontinuously helical. Positions 185–187 (NPA) match the NPA 2 motif. Topologically, residues 192 to 203 (PAVVMNRFSPSH) are extracellular. A helical membrane pass occupies residues 204-224 (WVFWVGPIVGAVLAAILYFYL). Residues 225–265 (LFPSSLSLHDRVAVVKGTYEPEEDWEDHREERKKTIELTAH) lie on the Cytoplasmic side of the membrane.

It belongs to the MIP/aquaporin (TC 1.A.8) family. Homotetramer; each monomer provides an independent water pore. Interacts with TRPV4; the interaction is probably indirect and regulates TRPV4 activation by hypotonicity. In terms of tissue distribution, detected at the luminal membrane of secretory epithelial cells in hindpaw sweat glands. Detected in acinar cells in salivary glands, in duct cells in lacrimal glands and in lung (at protein level). Detected in lung, parotid, submandibular, sublingual, and lacrimal gland tissues.

The protein resides in the apical cell membrane. It is found in the cell membrane. It localises to the cytoplasmic vesicle membrane. The catalysed reaction is H2O(in) = H2O(out). In terms of biological role, aquaporins form homotetrameric transmembrane channels, with each monomer independently mediating water transport across the plasma membrane along its osmotic gradient. Plays an important role in fluid secretion in salivary glands. Required for TRPV4 activation by hypotonicity. Together with TRPV4, controls regulatory volume decrease in salivary epithelial cells. Seems to play a redundant role in water transport in the eye, lung and in sweat glands. The sequence is that of Aquaporin-5 from Mus musculus (Mouse).